Here is a 431-residue protein sequence, read N- to C-terminus: Adenylosuccinate synthetase (431 aa).

GTP is bound by residues 12–18 (GDEGKGK) and 40–42 (GHT). Catalysis depends on D13, which acts as the Proton acceptor. Residues D13 and G40 each contribute to the Mg(2+) site. Residues 13-16 (DEGK), 38-41 (NAGH), T129, R143, Q224, T239, and R303 contribute to the IMP site. Residue H41 is the Proton donor of the active site. Residue 299–305 (VTTGRAR) coordinates substrate. GTP contacts are provided by residues R305, 331 to 333 (KLD), and 413 to 415 (GVG).

The protein belongs to the adenylosuccinate synthetase family. In terms of assembly, homodimer. Requires Mg(2+) as cofactor.

It localises to the cytoplasm. It carries out the reaction IMP + L-aspartate + GTP = N(6)-(1,2-dicarboxyethyl)-AMP + GDP + phosphate + 2 H(+). It participates in purine metabolism; AMP biosynthesis via de novo pathway; AMP from IMP: step 1/2. Plays an important role in the de novo pathway of purine nucleotide biosynthesis. Catalyzes the first committed step in the biosynthesis of AMP from IMP. The chain is Adenylosuccinate synthetase from Mycolicibacterium vanbaalenii (strain DSM 7251 / JCM 13017 / BCRC 16820 / KCTC 9966 / NRRL B-24157 / PYR-1) (Mycobacterium vanbaalenii).